Here is a 143-residue protein sequence, read N- to C-terminus: Transcriptional regulator MraZ (143 aa).

SpoVT-AbrB domains are found at residues 5–47 (EYEH…PRGV) and 76–119 (AADM…SPRR).

Belongs to the MraZ family. In terms of assembly, forms oligomers.

Its subcellular location is the cytoplasm. It is found in the nucleoid. This chain is Transcriptional regulator MraZ, found in Roseiflexus castenholzii (strain DSM 13941 / HLO8).